We begin with the raw amino-acid sequence, 226 residues long: MRIKVCGIKRVEDAVMAAYCGADAIGLVVGRKHNSDDFIDKHLAQKIVRECPPYISPVLVTELDDAEEISGLVHETGVTSVQLHSDCTVDSIISLRKTFPNIKIIKNFHVIGPGVIHAMKPFESVVDAFILDTLDLANDKVGSTGLVHDWSISRKIVKEVSRPVILAGGLTPENVGEAIRVVNPYGVDASSGLKDSNGFKDEMKVINFVHRAKNDFFKVRNLSLEN.

It belongs to the TrpF family.

The catalysed reaction is N-(5-phospho-beta-D-ribosyl)anthranilate = 1-(2-carboxyphenylamino)-1-deoxy-D-ribulose 5-phosphate. It participates in amino-acid biosynthesis; L-tryptophan biosynthesis; L-tryptophan from chorismate: step 3/5. This chain is N-(5'-phosphoribosyl)anthranilate isomerase 2 (trpF2), found in Methanosarcina mazei (strain ATCC BAA-159 / DSM 3647 / Goe1 / Go1 / JCM 11833 / OCM 88) (Methanosarcina frisia).